Here is a 252-residue protein sequence, read N- to C-terminus: Beta-carotene isomerase D27, chloroplastic (252 aa).

The transit peptide at 1-43 (MDSKMIAHNMSLTPTLAQWKKLRLKPKHTFVVGVLARPTDDIS) directs the protein to the chloroplast.

The cofactor is Fe cation. In terms of tissue distribution, highly expressed in roots. Expressed at low levels in leaves and stems.

Its subcellular location is the plastid. It is found in the chloroplast. The enzyme catalyses all-trans-beta-carotene = 9-cis-beta-carotene. In terms of biological role, involved in strigolactones biosynthesis by catalyzing the isomerization of the C9-C10 double bond in all-trans-beta-carotene leading to 9-cis-beta-carotene and providing the substrate for CCD7. Strigolactones are hormones that inhibit tillering and shoot branching through the MAX-dependent pathway, contribute to the regulation of shoot architectural response to phosphate-limiting conditions and function as rhizosphere signals that stimulate hyphal branching of arbuscular mycorrhizal fungi and trigger seed germination of root parasitic weeds. In Medicago truncatula (Barrel medic), this protein is Beta-carotene isomerase D27, chloroplastic.